We begin with the raw amino-acid sequence, 212 residues long: Major fimbrial subunit (212 aa).

The signal sequence occupies residues 1 to 18 (MKKTLLGSLILLAFATNA). C42 and C82 are oxidised to a cystine.

The protein belongs to the fimbrial protein family.

The protein resides in the fimbrium. Its function is as follows. Mediates adherence to oropharyngeal epithelial cells. Helps the airway colonization process. In Haemophilus influenzae, this protein is Major fimbrial subunit (hifA).